Here is a 231-residue protein sequence, read N- to C-terminus: Putative aminodeoxychorismate lyase (231 aa).

The protein belongs to the class-IV pyridoxal-phosphate-dependent aminotransferase family. The cofactor is pyridoxal 5'-phosphate.

It localises to the cytoplasm. Its subcellular location is the nucleus. It catalyses the reaction 4-amino-4-deoxychorismate = 4-aminobenzoate + pyruvate + H(+). The protein operates within cofactor biosynthesis; tetrahydrofolate biosynthesis; 4-aminobenzoate from chorismate: step 2/2. Functionally, converts 4-amino-4-deoxychorismate into 4-aminobenzoate (PABA) and pyruvate. The chain is Putative aminodeoxychorismate lyase from Schizosaccharomyces pombe (strain 972 / ATCC 24843) (Fission yeast).